A 2282-amino-acid chain; its full sequence is Ectopic P granules protein 5 homolog (2282 aa).

It belongs to the EPG5 family.

In terms of biological role, involved in autophagy. This is Ectopic P granules protein 5 homolog from Aedes aegypti (Yellowfever mosquito).